Consider the following 63-residue polypeptide: Large ribosomal subunit protein bL28 (63 aa).

The protein belongs to the bacterial ribosomal protein bL28 family.

The chain is Large ribosomal subunit protein bL28 from Desulfatibacillum aliphaticivorans.